The following is a 323-amino-acid chain: DNA-directed RNA polymerase subunit alpha 1 (323 aa).

The segment at 1 to 228 is alpha N-terminal domain (alpha-NTD); that stretch reads MSNNNSKLEF…EQISVFVSLR (228 aa). An alpha C-terminal domain (alpha-CTD) region spans residues 244–323; sequence IDPILLKPID…DNFRELVEGK (80 aa).

This sequence belongs to the RNA polymerase alpha chain family. As to quaternary structure, homodimer. The RNAP catalytic core consists of 2 alpha, 1 beta, 1 beta' and 1 omega subunit. When a sigma factor is associated with the core the holoenzyme is formed, which can initiate transcription.

The enzyme catalyses RNA(n) + a ribonucleoside 5'-triphosphate = RNA(n+1) + diphosphate. Its function is as follows. DNA-dependent RNA polymerase catalyzes the transcription of DNA into RNA using the four ribonucleoside triphosphates as substrates. The polypeptide is DNA-directed RNA polymerase subunit alpha 1 (Francisella tularensis subsp. tularensis (strain FSC 198)).